Consider the following 123-residue polypeptide: Fluoride-specific ion channel FluC (123 aa).

The next 4 helical transmembrane spans lie at 7–27 (LLLI…SGIL), 39–59 (LVNS…FFGF), 67–87 (IFLG…SYET), and 100–120 (FMNV…GFIL). Residues Gly-75 and Ser-78 each coordinate Na(+).

It belongs to the fluoride channel Fluc/FEX (TC 1.A.43) family.

It is found in the cell membrane. It carries out the reaction fluoride(in) = fluoride(out). Na(+) is not transported, but it plays an essential structural role and its presence is essential for fluoride channel function. Fluoride-specific ion channel. Important for reducing fluoride concentration in the cell, thus reducing its toxicity. This Pyrococcus abyssi (strain GE5 / Orsay) protein is Fluoride-specific ion channel FluC.